Here is a 272-residue protein sequence, read N- to C-terminus: 3-methyl-2-oxobutanoate hydroxymethyltransferase (272 aa).

Mg(2+) contacts are provided by Asp42 and Asp86. 3-methyl-2-oxobutanoate-binding positions include Asp42–Ser43, Asp86, and Lys116. Glu118 is a Mg(2+) binding site. Glu185 acts as the Proton acceptor in catalysis. The disordered stretch occupies residues Leu251–Cys272. Positions Thr262 to Cys272 are enriched in pro residues.

It belongs to the PanB family. As to quaternary structure, homodecamer; pentamer of dimers. Requires Mg(2+) as cofactor.

Its subcellular location is the cytoplasm. The catalysed reaction is 3-methyl-2-oxobutanoate + (6R)-5,10-methylene-5,6,7,8-tetrahydrofolate + H2O = 2-dehydropantoate + (6S)-5,6,7,8-tetrahydrofolate. It functions in the pathway cofactor biosynthesis; (R)-pantothenate biosynthesis; (R)-pantoate from 3-methyl-2-oxobutanoate: step 1/2. In terms of biological role, catalyzes the reversible reaction in which hydroxymethyl group from 5,10-methylenetetrahydrofolate is transferred onto alpha-ketoisovalerate to form ketopantoate. This Synechococcus sp. (strain CC9311) protein is 3-methyl-2-oxobutanoate hydroxymethyltransferase.